The following is a 443-amino-acid chain: Fatty acid desaturase 3 (443 aa).

Residues 1–130 (MGGVGEPDWE…EDMKLFEAKP (130 aa)) are Cytoplasmic-facing. The Cytochrome b5 heme-binding domain occupies 18–95 (LPTLRWEQVR…LQPLLIGELA (78 aa)). Residues 131 to 151 (AFFGLLLGHILAMEVLAWLMI) form a helical membrane-spanning segment. Tyrosine 152 is a topological domain (lumenal). Residues 153–173 (MLGPGWVPSTLAALILAISQA) traverse the membrane as a helical segment. Over 174–259 (QSWCLQHDLG…KKKRRYLPYN (86 aa)) the chain is Cytoplasmic. A Histidine box-1 motif is present at residues 180–184 (HDLGH). The Histidine box-2 signature appears at 217-221 (HFQHH). The chain crosses the membrane as a helical span at residues 260–280 (HQHLYFFLIGPPLLTLVNFEV). Topologically, residues 281–282 (EN) are lumenal. The helical transmembrane segment at 283 to 303 (LAYMLVCMQWMDLLWAASFYA) threads the bilayer. A topological domain (cytoplasmic) is located at residue arginine 304. Residues 305–325 (FLLSYIPFYGIPGALLLFVAV) form a helical membrane-spanning segment. Residues 326–443 (RVLESHWFVW…NVWLEAYLHQ (118 aa)) are Lumenal-facing. The Histidine box-3 motif lies at 381–385 (QIEHH).

This sequence belongs to the fatty acid desaturase type 1 family.

It is found in the endoplasmic reticulum membrane. It carries out the reaction an N-acylsphing-4-enine + 2 Fe(II)-[cytochrome b5] + O2 + 2 H(+) = an N-acyl-sphinga-4E,14Z-dienine + 2 Fe(III)-[cytochrome b5] + 2 H2O. It catalyses the reaction N-(hexanoyl)sphing-4-enine + 2 Fe(II)-[cytochrome b5] + O2 + 2 H(+) = N-hexanoyl-sphinga-4E,14Z-dienine + 2 Fe(III)-[cytochrome b5] + 2 H2O. The catalysed reaction is sphing-4-enine + 2 Fe(II)-[cytochrome b5] + O2 + 2 H(+) = sphinga-4E,14Z-dienine + 2 Fe(III)-[cytochrome b5] + 2 H2O. The enzyme catalyses (11E)-octadecenoyl-CoA + 2 Fe(II)-[cytochrome b5] + O2 + 2 H(+) = (11E,13Z)-octadecadienoyl-CoA + 2 Fe(III)-[cytochrome b5] + 2 H2O. It carries out the reaction N-acyl-1-deoxysphinganine + 2 Fe(II)-[cytochrome b5] + O2 + 2 H(+) = N-acyl-1-deoxysphing-14Z-enine + 2 Fe(III)-[cytochrome b5] + 2 H2O. It catalyses the reaction an N-acylsphinganine + 2 Fe(II)-[cytochrome b5] + O2 + 2 H(+) = an N-acylsphing-14Z-enine + 2 Fe(III)-[cytochrome b5] + 2 H2O. It functions in the pathway lipid metabolism; polyunsaturated fatty acid biosynthesis. The protein operates within lipid metabolism; sphingolipid metabolism. Mammals have different sphingoid bases that differ in their length and/or pattern of desaturation and hydroxyl groups. The predominant sphingoid base that comprises mammalian ceramides is sphing-4-enine (sphingosine or SPH) which has a trans (E) desaturation at carbon 4. FADS3 is a desaturase that introduces a cis (Z) double bond between carbon 14 and carbon 15 of the sphingoid base (also known as long chain base, LCB), producing LCBs such as sphinga-4,14-dienine (SPD, d18:2(4E,14Z)) from SPH. Prefers SPH-containing ceramides (N-acylsphing-4-enines) as substrates. Capable of metabolizing also the SPH in its free form. SPD ceramides occur widely in mammalian tissues and cells. Due to their unusual structure containing a cis double bond, SPD ceramides may have an opposite, negative role in lipid microdomain formation relative to conventional ceramides. Could be involved in the detoxification of 1-deoxy sphingolipids, by desaturating the cytotoxic 1-deoxysphinganine (1-deoxySA, m18:0), produced under pathological conditions, to 1-deoxysphingenine (1-deoxysphingosine, 1-deoxySO, m18:1). Although prefers SPH-containing ceramides (N-acylsphing-4-enines) as substrates, it also exhibits activity toward dihydrosphingosine-containing CERs (N-acylsphinganines) and produces 14Z-SPH-containing sphingolipids. Its desaturase mechanism involves an electron transfer facilitated by cytochrome b5. FADS3 also acts as a methyl-end fatty acyl coenzyme A (CoA) desaturase that introduces a cis double bond between the preexisting double bond and the terminal methyl group of the fatty acyl chain. Desaturates (11E)-octadecenoate (trans-vaccenoate, the predominant trans fatty acid in human milk) at carbon 13 to generate (11E,13Z)-octadecadienoate (also known as conjugated linoleic acid 11E,13Z-CLA). This Bos taurus (Bovine) protein is Fatty acid desaturase 3.